Consider the following 237-residue polypeptide: Endonuclease NucS (237 aa).

Belongs to the NucS endonuclease family.

It localises to the cytoplasm. Functionally, cleaves both 3' and 5' ssDNA extremities of branched DNA structures. The sequence is that of Endonuclease NucS from Saccharolobus islandicus (strain L.S.2.15 / Lassen #1) (Sulfolobus islandicus).